Consider the following 318-residue polypeptide: Trans-prenyltransferase (318 aa).

Residues 1-21 (MLHLIYISIIVVLIIILISYT) form a helical membrane-spanning segment. Isopentenyl diphosphate-binding residues include K85, R88, and H122. Mg(2+) is bound by residues D129 and D135. R140 provides a ligand contact to dimethylallyl diphosphate. Residue R141 coordinates isopentenyl diphosphate. Residues K216, T217, and Q254 each coordinate dimethylallyl diphosphate.

The protein belongs to the FPP/GGPP synthase family. Asfivirus trans-prenyltransferase subfamily. Mg(2+) serves as cofactor.

The protein localises to the host endoplasmic reticulum. It is found in the host membrane. The enzyme catalyses isopentenyl diphosphate + dimethylallyl diphosphate = (2E)-geranyl diphosphate + diphosphate. The catalysed reaction is isopentenyl diphosphate + (2E)-geranyl diphosphate = (2E,6E)-farnesyl diphosphate + diphosphate. It catalyses the reaction isopentenyl diphosphate + (2E,6E)-farnesyl diphosphate = (2E,6E,10E)-geranylgeranyl diphosphate + diphosphate. It carries out the reaction isopentenyl diphosphate + (2E,6E,10E)-geranylgeranyl diphosphate = (2E,6E,10E,14E)-geranylfarnesyl diphosphate + diphosphate. It functions in the pathway isoprenoid biosynthesis; farnesyl diphosphate biosynthesis; farnesyl diphosphate from geranyl diphosphate and isopentenyl diphosphate: step 1/1. Its pathway is isoprenoid biosynthesis; geranyl diphosphate biosynthesis; geranyl diphosphate from dimethylallyl diphosphate and isopentenyl diphosphate: step 1/1. It participates in isoprenoid biosynthesis; geranylgeranyl diphosphate biosynthesis; geranylgeranyl diphosphate from farnesyl diphosphate and isopentenyl diphosphate: step 1/1. Functionally, trans-prenyltransferase that catalyzes the sequential condensation of isopentenyl diphosphate (IPP) with different allylic diphosphates, such as dimethylallyl diphosphate (DMAPP), geranyl diphosphate (GPP), farnesyl diphosphate (FPP) and geranylgeranyl diphosphate (GGPP), farnesyl diphosphate being the best allylic substrate. This chain is Trans-prenyltransferase, found in African swine fever virus (isolate Warthog/Namibia/Wart80/1980) (ASFV).